The chain runs to 80 residues: FXYD domain-containing ion transport regulator 7 (80 aa).

Residues Met1 to Asn23 are Extracellular-facing. O-linked (GlcNAc) threonine glycosylation is found at Thr3, Thr5, and Thr9. A helical membrane pass occupies residues Thr24–Ser46. Residues Lys47 to Val80 lie on the Cytoplasmic side of the membrane. Positions Ala54–Val80 are disordered. Ser73 is modified (phosphoserine).

The protein belongs to the FXYD family. Regulatory subunit of the sodium/potassium-transporting ATPase which is composed of a catalytic alpha subunit, a non-catalytic beta subunit and a FXYD regulatory unit that modulates the enzymatic activity in a tissue- and isoform-specific way by changing affinities of the Na+/K+-ATPase toward Na(+), K(+) or ATP. In terms of processing, O-glycosylated; required for stabilization and translocation to the plasma membrane.

It localises to the cell membrane. Its function is as follows. Associates with and regulates the activity of the sodium/potassium-transporting ATPase (NKA) which catalyzes the hydrolysis of ATP coupled with the exchange of Na(+) and K(+) ions across the plasma membrane. Reduces the apparent affinity for external K(+), an effect that depends on the presence of external Na(+) and voltage. Increases the apparent affinity for intracellular Na(+). The chain is FXYD domain-containing ion transport regulator 7 (FXYD7) from Homo sapiens (Human).